A 351-amino-acid chain; its full sequence is Histidinol-phosphate aminotransferase (351 aa).

K213 is subject to N6-(pyridoxal phosphate)lysine.

The protein belongs to the class-II pyridoxal-phosphate-dependent aminotransferase family. Histidinol-phosphate aminotransferase subfamily. Homodimer. The cofactor is pyridoxal 5'-phosphate.

It carries out the reaction L-histidinol phosphate + 2-oxoglutarate = 3-(imidazol-4-yl)-2-oxopropyl phosphate + L-glutamate. The protein operates within amino-acid biosynthesis; L-histidine biosynthesis; L-histidine from 5-phospho-alpha-D-ribose 1-diphosphate: step 7/9. This chain is Histidinol-phosphate aminotransferase, found in Thermoanaerobacter sp. (strain X514).